Consider the following 506-residue polypeptide: Histidine ammonia-lyase (506 aa).

The 5-imidazolinone (Ala-Gly) cross-link spans 143–145 (ASG). 2,3-didehydroalanine (Ser) is present on Ser-144.

This sequence belongs to the PAL/histidase family. In terms of processing, contains an active site 4-methylidene-imidazol-5-one (MIO), which is formed autocatalytically by cyclization and dehydration of residues Ala-Ser-Gly.

It is found in the cytoplasm. The catalysed reaction is L-histidine = trans-urocanate + NH4(+). The protein operates within amino-acid degradation; L-histidine degradation into L-glutamate; N-formimidoyl-L-glutamate from L-histidine: step 1/3. This is Histidine ammonia-lyase from Salmonella paratyphi B (strain ATCC BAA-1250 / SPB7).